The sequence spans 1029 residues: E3 ubiquitin-protein ligase UPL6 (1029 aa).

The segment at 1-20 (MFFSGDPSTRKRVDLGGRST) is disordered. Positions 8–20 (STRKRVDLGGRST) are enriched in basic and acidic residues. An IQ domain is found at 45–74 (QNSAALKIQKFFRGRRSMAIERSKVRHDFC). Residues 688-1029 (SEDDLRSSIR…ISAEAGFDLS (342 aa)) form the HECT domain. C997 (glycyl thioester intermediate) is an active-site residue.

This sequence belongs to the UPL family.

It carries out the reaction S-ubiquitinyl-[E2 ubiquitin-conjugating enzyme]-L-cysteine + [acceptor protein]-L-lysine = [E2 ubiquitin-conjugating enzyme]-L-cysteine + N(6)-ubiquitinyl-[acceptor protein]-L-lysine.. It participates in protein modification; protein ubiquitination. In terms of biological role, probable E3 ubiquitin-protein ligase which mediates ubiquitination and subsequent proteasomal degradation of target proteins. This Arabidopsis thaliana (Mouse-ear cress) protein is E3 ubiquitin-protein ligase UPL6 (UPL6).